The sequence spans 502 residues: Thermosome subunit beta (502 aa).

This sequence belongs to the TCP-1 chaperonin family. In terms of assembly, forms a Heterooligomeric complex of two stacked eight-membered rings.

Functionally, molecular chaperone; binds unfolded polypeptides in vitro, and has a weak ATPase activity. The protein is Thermosome subunit beta (thsB) of Desulfurococcus mucosus (Desulfurococcus mobilis).